The sequence spans 672 residues: Zinc finger and BTB domain-containing protein 24 (672 aa).

The BTB domain maps to 39–105 (CDITLIVEDV…MYSAVVLVDE (67 aa)). Residues 136–208 (HMQVKRKRGR…GKRKIKQPIR (73 aa)) are disordered. Residues 140–152 (KRKRGRPKKNQDL) constitute a DNA-binding region (a.T hook 1). Basic and acidic residues predominate over residues 148–158 (KNQDLSQKENP). Over residues 160–171 (SELQAQTSSEIQ) the composition is skewed to polar residues. Residues 198–208 (EGKRKIKQPIR) are compositionally biased toward basic residues. Residues 223–235 (PGKRGRRRKYPDT) constitute a DNA-binding region (a.T hook 2). 8 consecutive C2H2-type zinc fingers follow at residues 237–259 (ARCEECGKVFKSHLFLKIHQRTH), 265–287 (FRCSVCGKEFTQKHTLLVHQRMH), 293–315 (YICTVCSKALSTKHSLLEHMNLH), 321–343 (FTCEECGKSFSQQRQLKSHNRVH), 349–371 (PECAECHHKFMDAAQLKKHLRTH), 377–399 (FTCEICGKCFTAKSTLQTHIRIH), 405–427 (YVCKVCDKTFSDPSARRRHEVSH), and 433–455 (FSCSICKVSFARKDNLKAHIKTH). Positions 453–492 (KTHNKENPPAQAESTDKPPQSAPEQQEQEQQQQQQTSGDK) are disordered. Low complexity predominate over residues 476–487 (EQQEQEQQQQQQ).

Belongs to the krueppel C2H2-type zinc-finger protein family.

Its subcellular location is the nucleus. In terms of biological role, may be involved in BMP2-induced transcription. This Danio rerio (Zebrafish) protein is Zinc finger and BTB domain-containing protein 24 (zbtb24).